The primary structure comprises 102 residues: Scorpine-like-2 (102 aa).

An N-terminal signal peptide occupies residues 1–19 (MQTQCTVLQLLVLVALCSC). One can recognise a BetaSPN-type CS-alpha/beta domain in the interval 63 to 102 (QQLCLIVDTVQWCNKSCLAAENKEGYCHGTKCKCGIKVSY). Disulfide bonds link Cys-66–Cys-89, Cys-75–Cys-94, and Cys-79–Cys-96.

It belongs to the long chain scorpion toxin family. Class 3 subfamily. In terms of tissue distribution, expressed by the venom gland.

It localises to the secreted. In terms of biological role, inhibits voltage-gated potassium channels. In Urodacus yaschenkoi (Inland robust scorpion), this protein is Scorpine-like-2.